The chain runs to 127 residues: Large ribosomal subunit protein bL20c (127 aa).

Belongs to the bacterial ribosomal protein bL20 family.

The protein resides in the plastid. It localises to the chloroplast. Functionally, binds directly to 23S ribosomal RNA and is necessary for the in vitro assembly process of the 50S ribosomal subunit. It is not involved in the protein synthesizing functions of that subunit. The polypeptide is Large ribosomal subunit protein bL20c (Jasminum nudiflorum (Winter jasmine)).